Consider the following 306-residue polypeptide: MVPPREDVTVRIVCERRRTAGKEARPPPSAKPTPGNTSSHPNAKETHRSNEPFFRLYTKQSHRRSIMASTLCVVLGSASSTDPAAISAATMTDAAAKTIHDAIYESLELVVVASELADVYDSMELSRFTKILSPNATVSVSVIGDATKSLSPIHTSFLLAGLANNSERRNADGSRTLTATRRNNTTNSVATLNFASNNNNGNDLLIDEDNLLTDASNLLGAPPSMSAAATKSGDDCSGRAPCDDCTCGRAEGAKEGNSEQPKEIKSSSCGKCSLGDAFRCASCPYLGKPAFKPGEEHLVLDLQDDF.

Residues 1–25 (MVPPREDVTVRIVCERRRTAGKEAR) are compositionally biased toward basic and acidic residues. A disordered region spans residues 1-51 (MVPPREDVTVRIVCERRRTAGKEARPPPSAKPTPGNTSSHPNAKETHRSNE). Residues 59 to 190 (KQSHRRSIMA…RRNNTTNSVA (132 aa)) form an N-terminal SAM-like domain region. The segment at 191 to 218 (TLNFASNNNNGNDLLIDEDNLLTDASNL) is linker. [2Fe-2S] cluster is bound by residues Cys236, Cys242, Cys245, and Cys247. The interval 236-247 (CSGRAPCDDCTC) is fe-S binding site A. The span at 252 to 265 (GAKEGNSEQPKEIK) shows a compositional bias: basic and acidic residues. A disordered region spans residues 252-272 (GAKEGNSEQPKEIKSSSCGKC). 4 residues coordinate [4Fe-4S] cluster: Cys269, Cys272, Cys280, and Cys283. Short sequence motifs (cx2C motif) lie at residues 269–272 (CGKC) and 280–283 (CASC). The segment at 269–283 (CGKCSLGDAFRCASC) is fe-S binding site B.

The protein belongs to the anamorsin family. As to quaternary structure, monomer. [2Fe-2S] cluster serves as cofactor. It depends on [4Fe-4S] cluster as a cofactor.

Its subcellular location is the cytoplasm. It localises to the mitochondrion intermembrane space. Functionally, component of the cytosolic iron-sulfur (Fe-S) protein assembly (CIA) machinery. Required for the maturation of extramitochondrial Fe-S proteins. Part of an electron transfer chain functioning in an early step of cytosolic Fe-S biogenesis, facilitating the de novo assembly of a [4Fe-4S] cluster on the cytosolic Fe-S scaffold complex. Electrons are transferred from NADPH via a FAD- and FMN-containing diflavin oxidoreductase. Together with the diflavin oxidoreductase, also required for the assembly of the diferric tyrosyl radical cofactor of ribonucleotide reductase (RNR), probably by providing electrons for reduction during radical cofactor maturation in the catalytic small subunit. The protein is Anamorsin homolog of Phaeodactylum tricornutum (strain CCAP 1055/1).